Consider the following 469-residue polypeptide: 2-oxoisovalerate dehydrogenase subunit beta, mitochondrial (469 aa).

Residues 1–40 (MKRSTVVIRPSARALSRQASSQSFLLARSSALTSRQRRLY) constitute a mitochondrion transit peptide. Position 167 (Tyr-167) interacts with thiamine diphosphate. Residues Gly-194, Leu-196, and Thr-197 each coordinate K(+).

As to quaternary structure, heterotetramer of 2 alpha and 2 beta chains. The cofactor is thiamine diphosphate.

It localises to the mitochondrion matrix. It catalyses the reaction N(6)-[(R)-lipoyl]-L-lysyl-[protein] + 3-methyl-2-oxobutanoate + H(+) = N(6)-[(R)-S(8)-2-methylpropanoyldihydrolipoyl]-L-lysyl-[protein] + CO2. The branched-chain alpha-keto dehydrogenase complex catalyzes the overall conversion of alpha-keto acids to acyl-CoA and CO(2). It contains multiple copies of three enzymatic components: branched-chain alpha-keto acid decarboxylase (E1), lipoamide acyltransferase (E2) and lipoamide dehydrogenase (E3). In Chaetomium thermophilum (strain DSM 1495 / CBS 144.50 / IMI 039719) (Thermochaetoides thermophila), this protein is 2-oxoisovalerate dehydrogenase subunit beta, mitochondrial.